The following is a 562-amino-acid chain: Arginine--tRNA ligase 1 (562 aa).

Residues Pro-122–His-132 carry the 'HIGH' region motif.

Belongs to the class-I aminoacyl-tRNA synthetase family. In terms of assembly, monomer.

It localises to the cytoplasm. It carries out the reaction tRNA(Arg) + L-arginine + ATP = L-arginyl-tRNA(Arg) + AMP + diphosphate. This is Arginine--tRNA ligase 1 from Bacillus thuringiensis subsp. konkukian (strain 97-27).